The chain runs to 511 residues: Myrosinase 4 (511 aa).

Positions M1–S23 are cleaved as a signal peptide. 3 disulfides stabilise this stretch: C31-C450, C39-C445, and C230-C233. N-linked (GlcNAc...) asparagine glycans are attached at residues N46 and N53. A beta-D-glucoside-binding positions include Q64, H165, and N210–Q211. Residues Y351 and E418 each coordinate a beta-D-glucoside. Residue E418 is the Nucleophile of the active site. An N-linked (GlcNAc...) asparagine glycan is attached at N428. A beta-D-glucoside-binding positions include W467, E474 to F475, and F483. The N-linked (GlcNAc...) asparagine glycan is linked to N489.

It belongs to the glycosyl hydrolase 1 family. As to expression, specifically expressed in roots.

It catalyses the reaction a thioglucoside + H2O = a sugar + a thiol.. The catalysed reaction is Hydrolysis of terminal, non-reducing beta-D-glucosyl residues with release of beta-D-glucose.. Hydrolyzes sinigrin and, with lower efficiency, p-nitrophenyl beta-D-glucoside. The protein is Myrosinase 4 of Arabidopsis thaliana (Mouse-ear cress).